Reading from the N-terminus, the 262-residue chain is MGHEDAVYLAKLAEQAERYEEMVENMKIVASEDRDLTVEERNLLSVAYKNVIGARRASWRIVTSIEQKEESKGNSSQVTLIKEYRQKIENELAKICDDILEVLDQHLIPSAKSGESKVFYHKIKGDYHRYLAEFAIGDRRKDSADKSLEAYKAATEVAQTELPPTHPIRLGLALNFSVFYYEILNAPDQACHLAKQAFDDAIAELDTLSEESYKDSTLIMQLLRDNLTLWTSSEAETPARLMPLLRRRPLLRLPSRRRRAQG.

The protein belongs to the 14-3-3 family.

The sequence is that of 14-3-3 protein homolog from Trichoderma harzianum (Hypocrea lixii).